The chain runs to 91 residues: Putative regulatory protein Cyan7425_4125 (91 aa).

Belongs to the RemA family.

In Cyanothece sp. (strain PCC 7425 / ATCC 29141), this protein is Putative regulatory protein Cyan7425_4125.